The chain runs to 272 residues: Bis(5'-nucleosyl)-tetraphosphatase, symmetrical (272 aa).

This sequence belongs to the Ap4A hydrolase family.

It carries out the reaction P(1),P(4)-bis(5'-adenosyl) tetraphosphate + H2O = 2 ADP + 2 H(+). Hydrolyzes diadenosine 5',5'''-P1,P4-tetraphosphate to yield ADP. The chain is Bis(5'-nucleosyl)-tetraphosphatase, symmetrical from Shewanella frigidimarina (strain NCIMB 400).